Reading from the N-terminus, the 265-residue chain is Type III pantothenate kinase (265 aa).

17–24 (DIGNTSIS) contacts ATP. 114–117 (GSDV) contributes to the substrate binding site. The active-site Proton acceptor is D116. D137 contributes to the K(+) binding site. T140 lines the ATP pocket. T192 lines the substrate pocket.

This sequence belongs to the type III pantothenate kinase family. As to quaternary structure, homodimer. NH4(+) serves as cofactor. Requires K(+) as cofactor.

It is found in the cytoplasm. The enzyme catalyses (R)-pantothenate + ATP = (R)-4'-phosphopantothenate + ADP + H(+). Its pathway is cofactor biosynthesis; coenzyme A biosynthesis; CoA from (R)-pantothenate: step 1/5. Catalyzes the phosphorylation of pantothenate (Pan), the first step in CoA biosynthesis. This Borrelia hermsii (strain HS1 / DAH) protein is Type III pantothenate kinase.